We begin with the raw amino-acid sequence, 467 residues long: tRNA-2-methylthio-N(6)-dimethylallyladenosine synthase (467 aa).

In terms of domain architecture, MTTase N-terminal spans 4-124 (RKLFIKSYGC…LPEMVAKVER (121 aa)). Residues C13, C49, C87, C161, C165, and C168 each contribute to the [4Fe-4S] cluster site. Residues 147–379 (QAHGPSAFLS…QARLVEIQQA (233 aa)) form the Radical SAM core domain. In terms of domain architecture, TRAM spans 382-444 (QACVGRPMDV…SNSLAARLVE (63 aa)).

This sequence belongs to the methylthiotransferase family. MiaB subfamily. As to quaternary structure, monomer. The cofactor is [4Fe-4S] cluster.

The protein localises to the cytoplasm. It carries out the reaction N(6)-dimethylallyladenosine(37) in tRNA + (sulfur carrier)-SH + AH2 + 2 S-adenosyl-L-methionine = 2-methylsulfanyl-N(6)-dimethylallyladenosine(37) in tRNA + (sulfur carrier)-H + 5'-deoxyadenosine + L-methionine + A + S-adenosyl-L-homocysteine + 2 H(+). In terms of biological role, catalyzes the methylthiolation of N6-(dimethylallyl)adenosine (i(6)A), leading to the formation of 2-methylthio-N6-(dimethylallyl)adenosine (ms(2)i(6)A) at position 37 in tRNAs that read codons beginning with uridine. The protein is tRNA-2-methylthio-N(6)-dimethylallyladenosine synthase of Rhodospirillum rubrum (strain ATCC 11170 / ATH 1.1.1 / DSM 467 / LMG 4362 / NCIMB 8255 / S1).